The primary structure comprises 281 residues: Voltage-dependent L-type calcium channel subunit alpha-1S (281 aa).

An III repeat occupies 1–8 (VGFVIVTF). Residues 1–17 (VGFVIVTFQEQGESEYK) form a dihydropyridine binding region. The stretch at 45–281 (NPYQYQIWYV…TCGTGFAYFY (237 aa)) is one IV repeat. Residues 59–80 (YFEYLMFFLIMLNTICLGMQHY) form a helical membrane-spanning segment. Asn81 is a glycosylation site (N-linked (GlcNAc...) asparagine). Residues 89-110 (VSDILNVAFTVLFTLEMILKLM) form a helical membrane-spanning segment. Residues 121–140 (PWNVFDFLIVIGSIIDVILS) form a helical membrane-spanning segment. The helical transmembrane segment at 153–171 (ITFFRLFRVMRLVKLLSRG) threads the bilayer. A helical transmembrane segment spans residues 190–210 (YVALLIVMLFFIYAVIGMQMF). The pore-forming intramembrane region spans 233–251 (AVLLLFRCATGEAWQEILL). The short motif at 242–245 (TGEA) is the Selectivity filter of repeat IV element. The segment at 258-281 (RCDPESDYAEGEEYTCGTGFAYFY) is dihydropyridine binding. The cysteines at positions 259 and 273 are disulfide-linked. A phenylalkylamine binding region spans residues 270–281 (EYTCGTGFAYFY).

The protein belongs to the calcium channel alpha-1 subunit (TC 1.A.1.11) family. CACNA1S subfamily. In terms of assembly, component of a calcium channel complex consisting of a pore-forming alpha subunit (CACNA1S) and the ancillary subunits CACNB1 or CACNB2, CACNG1 and CACNA2D1. The channel complex contains alpha, beta, gamma and delta subunits in a 1:1:1:1 ratio, i.e. it contains either CACNB1 or CACNB2. CACNA1S channel activity is modulated by the auxiliary subunits (CACNB1 or CACNB2, CACNG1 and CACNA2D1). Interacts with DYSF and JSRP1. Interacts with RYR1. Interacts with CALM. In terms of processing, the alpha-1S subunit is found in two isoforms in the skeletal muscle: a minor form of 212 kDa containing the complete amino acid sequence, and a major form of 190 kDa derived from the full-length form by post-translational proteolysis close to Phe-1690. Post-translationally, both the minor and major forms are phosphorylated in vitro by PKA. Phosphorylation by PKA activates the calcium channel.

It localises to the cell membrane. Its subcellular location is the sarcolemma. It is found in the T-tubule. The enzyme catalyses Ca(2+)(in) = Ca(2+)(out). With respect to regulation, channel activity is blocked by dihydropyridines (DHP), phenylalkylamines, and by benzothiazepines. Pore-forming, alpha-1S subunit of the voltage-gated calcium channel that gives rise to L-type calcium currents in skeletal muscle. Calcium channels containing the alpha-1S subunit play an important role in excitation-contraction coupling in skeletal muscle via their interaction with RYR1, which triggers Ca(2+) release from the sarcplasmic reticulum and ultimately results in muscle contraction. Long-lasting (L-type) calcium channels belong to the 'high-voltage activated' (HVA) group. The protein is Voltage-dependent L-type calcium channel subunit alpha-1S (CACNA1S) of Gallus gallus (Chicken).